We begin with the raw amino-acid sequence, 74 residues long: Putative defensin-like protein 36 (74 aa).

The N-terminal stretch at 1-22 (MASNKVSFFLVLCLCILLAGEC) is a signal peptide. Cystine bridges form between Cys-33/Cys-59, Cys-45/Cys-69, and Cys-49/Cys-71.

Belongs to the DEFL family.

The protein resides in the secreted. In Arabidopsis thaliana (Mouse-ear cress), this protein is Putative defensin-like protein 36.